The chain runs to 298 residues: RNA exonuclease 4 (298 aa).

The stretch at 1-73 forms a coiled coil; that stretch reads MRKTVRKNKQ…EAKLKLKSAT (73 aa). Residues 125-275 form the Exonuclease domain; sequence FFSIDCKIIE…RDTIINVILY (151 aa).

The protein belongs to the REXO4 family.

Its subcellular location is the nucleus. The protein is RNA exonuclease 4 (rexo4) of Dictyostelium discoideum (Social amoeba).